The chain runs to 37 residues: Potassium channel toxin alpha-KTx 15.3 (37 aa).

Gln1 carries the post-translational modification Pyrrolidone carboxylic acid. 3 disulfide bridges follow: Cys8/Cys28, Cys13/Cys33, and Cys17/Cys35.

As to expression, expressed by the venom gland.

The protein resides in the secreted. Functionally, inhibits A-type (Kv4) voltage-gated potassium channels of striated neurons (Ki=131 nM), probably by acting as a pore blocker. Has also been shown to block ERG1/Kv11.1/KCNH2 potassium channels (IC(50)=7.9 uM). The presence of the Kv4-associated proteins DPP6 or DPP10 is mandatory to have high-affinity blockade of Kv4.2/KCND2 and Kv4.3/KCND3 channels (80-90% inhibition at 500 nM of toxin). In contrast, the presence of the Kv4-associated protein KChIP1/KCNIP1 does not enhance the affinity blockade (only 40% inhibition at 500 nM). In adult rat brain, the toxin binds to sites in the striatum, and cerebellum. It shares the same target in rat brain than AaTX1 (AC Q867F4) and BmTX3 (AC Q8I0L5). In DPP6 knockout mice, A-type currents are about 20-fold less affected by the toxin. In rodent models of Parkinson's disease, the toxin reduces motor symptoms and emotional and cognitive symptoms. The polypeptide is Potassium channel toxin alpha-KTx 15.3 (Androctonus mauritanicus mauritanicus (Scorpion)).